The primary structure comprises 71 residues: uncharacterized protein (71 aa).

This is an uncharacterized protein from Stutzerimonas stutzeri (strain A1501) (Pseudomonas stutzeri).